We begin with the raw amino-acid sequence, 144 residues long: Large ribosomal subunit protein uL15 (144 aa).

The disordered stretch occupies residues 1-52; that stretch reads MRLNTLSPAEGAKHSAKRLGRGIGSGLGKTGGRGHKGQKSRTGSGVRRGFEG. Residues 21 to 31 are compositionally biased toward gly residues; sequence RGIGSGLGKTG.

The protein belongs to the universal ribosomal protein uL15 family. In terms of assembly, part of the 50S ribosomal subunit.

Binds to the 23S rRNA. The chain is Large ribosomal subunit protein uL15 from Haemophilus influenzae (strain 86-028NP).